The chain runs to 488 residues: HSPB1-associated protein 1 (488 aa).

The interval 88–208 is interaction with HSPB1; the sequence is ETTCNYVEAT…EDTPFLYPTR (121 aa). Residues 124-288 form the JmjC domain; it reads WAYADYKYFV…HLARVEEAIT (165 aa). Over residues 369-379 the composition is skewed to polar residues; the sequence is QTGSQNLTTGT. The segment at 369–415 is disordered; that stretch reads QTGSQNLTTGTDKPEAASPFGPDLVPVAQRSEEPPSERGGIFGSDGK.

In terms of assembly, interacts with CRYAB and HSPB1. In terms of tissue distribution, widely expressed.

Its subcellular location is the cytoplasm. In terms of biological role, may play a role in cellular stress response. The polypeptide is HSPB1-associated protein 1 (HSPBAP1) (Homo sapiens (Human)).